The primary structure comprises 443 residues: Putative cytochrome bd menaquinol oxidase subunit I (443 aa).

9 consecutive transmembrane segments (helical) span residues 19 to 39, 60 to 80, 93 to 113, 125 to 145, 176 to 196, 219 to 239, 322 to 342, 357 to 377, and 405 to 425; these read IIFA…ELIY, VLLG…ALLW, LPFQ…SIYV, IVAV…ITNV, FFIT…FIVA, ALLL…LNGH, LFNA…IGVV, LIIF…GWIF, and VLFL…VYVL. His182 is a heme b binding site.

The protein belongs to the cytochrome ubiquinol oxidase subunit 1 family. It depends on heme b as a cofactor.

Its subcellular location is the cell membrane. Functionally, may have a role in sporulation. Can compensate for the loss of cytochrome aa3. This chain is Putative cytochrome bd menaquinol oxidase subunit I (ythA), found in Bacillus subtilis (strain 168).